The chain runs to 682 residues: ATP-dependent zinc metalloprotease FtsH (682 aa).

The Cytoplasmic segment spans residues 1-7 (MKQSHKT). The chain crosses the membrane as a helical span at residues 8–28 (ILLWALLIFLFVMIYNLISDG). Residues 29-138 (TSGEETLDTT…YEVKAKEEST (110 aa)) are Periplasmic-facing. A helical transmembrane segment spans residues 139–159 (FWQSLLISWLPMLLLFALFFF). Residues 160–682 (FMRQLQAGGG…SGTDPEPEPA (523 aa)) are Cytoplasmic-facing. 232-239 (GPPGTGKT) is a binding site for ATP. H454 lines the Zn(2+) pocket. Residue E455 is part of the active site. 2 residues coordinate Zn(2+): H458 and D531. Positions 638–682 (LSRPAVVSKPSADAESSVDEDEREARPALFPPLGKSGTDPEPEPA) are disordered.

In the central section; belongs to the AAA ATPase family. The protein in the C-terminal section; belongs to the peptidase M41 family. Homohexamer. Zn(2+) serves as cofactor.

It is found in the cell inner membrane. Functionally, acts as a processive, ATP-dependent zinc metallopeptidase for both cytoplasmic and membrane proteins. Plays a role in the quality control of integral membrane proteins. This Haliangium ochraceum (strain DSM 14365 / JCM 11303 / SMP-2) protein is ATP-dependent zinc metalloprotease FtsH.